The chain runs to 278 residues: SPX domain-containing protein 2 (278 aa).

The SPX domain maps to 1 to 162 (MKFGKSLSSQ…GSMIRLPFVQ (162 aa)). Disordered stretches follow at residues 191 to 242 (PTNE…KSTV) and 255 to 278 (GSST…EPGR).

Interacts (via SPX domain) with PHR2 (via C-terminus). Interacts with RLI1 in the nucleus to prevents its positive regulation of leaf inclination during phosphate (Pi) starvation.

It localises to the nucleus. Functionally, inhibits PHR2 DNA-binding activity via a phosphate (Pi)-dependent protein interaction. Together with SPX1, plays a negative role in the regulation of leaf inclination by preventing RLI1 transcription factor activity in Pi depleted conditions. This is SPX domain-containing protein 2 from Oryza sativa subsp. indica (Rice).